The following is a 414-amino-acid chain: Gamma-glutamyl phosphate reductase (414 aa).

It belongs to the gamma-glutamyl phosphate reductase family.

It is found in the cytoplasm. The catalysed reaction is L-glutamate 5-semialdehyde + phosphate + NADP(+) = L-glutamyl 5-phosphate + NADPH + H(+). The protein operates within amino-acid biosynthesis; L-proline biosynthesis; L-glutamate 5-semialdehyde from L-glutamate: step 2/2. Its function is as follows. Catalyzes the NADPH-dependent reduction of L-glutamate 5-phosphate into L-glutamate 5-semialdehyde and phosphate. The product spontaneously undergoes cyclization to form 1-pyrroline-5-carboxylate. The chain is Gamma-glutamyl phosphate reductase from Caldanaerobacter subterraneus subsp. tengcongensis (strain DSM 15242 / JCM 11007 / NBRC 100824 / MB4) (Thermoanaerobacter tengcongensis).